Consider the following 633-residue polypeptide: ATP-dependent clpX-like chaperone, mitochondrial (633 aa).

A mitochondrion-targeting transit peptide spans 1–56; the sequence is MSSCGACTCGAAAARLLTTSLTSAQRGISCGRIHVPVLGRLGTLDTQILRRAPLRT. Positions 65 to 101 are disordered; the sequence is ASKDGTNKDGSGDGNKKSVTEGSSKKSGSGNSGKGGN. Residues 69-83 show a composition bias toward basic and acidic residues; that stretch reads GTNKDGSGDGNKKSV. Over residues 84-93 the composition is skewed to low complexity; sequence TEGSSKKSGS. Residues 93–146 form the ClpX-type ZB domain; sequence SGNSGKGGNQLRCPKCGDLCTHVETFVSSTRFVKCEKCHHFFVVLSEADSKKSI. 4 residues coordinate Zn(2+): Cys-105, Cys-108, Cys-127, and Cys-130. 294–301 contributes to the ATP binding site; sequence PTGSGKTL. An N6-acetyllysine modification is found at Lys-437. Basic and acidic residues predominate over residues 598–610; it reads KEPGYIRAPSKES. A disordered region spans residues 598–633; the sequence is KEPGYIRAPSKESSEEDYDSGVEEDGWPRQADAANS. Acidic residues predominate over residues 611-622; that stretch reads SEEDYDSGVEED. Ser-617 carries the phosphoserine modification.

It belongs to the ClpX chaperone family. In terms of assembly, homohexamer that forms a ring structure; this hexamerization requires ATP binding. Component of the ClpXP complex formed by the assembly of two CLPP heptameric rings with two CLPX hexameric rings, giving rise to a symmetrical structure with two central CLPP rings flanked by a CLPX ring at either end of the complex. Interacts with TFAM.

It is found in the mitochondrion. The protein resides in the mitochondrion matrix. It localises to the mitochondrion nucleoid. It carries out the reaction ATP + H2O = ADP + phosphate + H(+). In terms of biological role, ATP-dependent chaperone that functions as an unfoldase. As part of the ClpXP protease complex, it recognizes specific protein substrates, unfolds them using energy derived from ATP hydrolysis, and then translocates them to the proteolytic subunit (CLPP) of the ClpXP complex for degradation. Thanks to its chaperone activity, it also functions in the incorporation of the pyridoxal phosphate cofactor into 5-aminolevulinate synthase, thereby activating 5-aminolevulinate (ALA) synthesis, the first step in heme biosynthesis. This chaperone is also involved in the control of mtDNA nucleoid distribution, by regulating mitochondrial transcription factor A (TFAM) activity. This is ATP-dependent clpX-like chaperone, mitochondrial from Rattus norvegicus (Rat).